The primary structure comprises 320 residues: Pyrroline-5-carboxylate reductase 2 (320 aa).

Ser2 is subject to N-acetylserine. NADP(+) contacts are provided by residues 6 to 11 and Ser34; that span reads IGAGQL. Ala8, Gln10, Leu11, Ser34, Glu36, Asn56, Val70, Lys71, and Ala97 together coordinate NADPH. Residues Asn56, 69–72, and 95–97 contribute to the NADP(+) site; these read AVKP and CAA. Glu164 is an L-proline binding site. Asn230 is a binding site for NADPH. Residues Ala237 and Thr238 each contribute to the L-proline site. A disordered region spans residues 298-320; the sequence is TTLTPTSSGKLLTRSPVPGGKKD. Ser304 is modified (phosphoserine).

This sequence belongs to the pyrroline-5-carboxylate reductase family. In terms of assembly, homodecamer; composed of 5 homodimers. Interacts with LTO1.

The protein localises to the cytoplasm. Its subcellular location is the mitochondrion. It carries out the reaction L-proline + NADP(+) = (S)-1-pyrroline-5-carboxylate + NADPH + 2 H(+). The catalysed reaction is L-proline + NAD(+) = (S)-1-pyrroline-5-carboxylate + NADH + 2 H(+). The protein operates within amino-acid biosynthesis; L-proline biosynthesis; L-proline from L-glutamate 5-semialdehyde: step 1/1. Functionally, oxidoreductase that catalyzes the last step in proline biosynthesis, which corresponds to the reduction of pyrroline-5-carboxylate to L-proline using NAD(P)H. At physiologic concentrations, has higher specific activity in the presence of NADH. Involved in cellular response to oxidative stress. In some cell types, such as erythrocytes, its primary function may be the generation of NADP(+). This chain is Pyrroline-5-carboxylate reductase 2 (PYCR2), found in Bos taurus (Bovine).